A 291-amino-acid chain; its full sequence is Protease HtpX homolog (291 aa).

The next 2 membrane-spanning stretches (helical) occupy residues 4–24 (IVLFLATNLAIVLVLSLTMRL) and 39–59 (TSLLIFAAVMGFGGSLISLAI). Residue histidine 145 coordinates Zn(2+). Glutamate 146 is a catalytic residue. Histidine 149 contributes to the Zn(2+) binding site. A run of 2 helical transmembrane segments spans residues 156-176 (VTLALIQGVVNTFVMFLSRII) and 195-215 (FFVTMIVAELVLGILASIIVM). Glutamate 222 provides a ligand contact to Zn(2+).

This sequence belongs to the peptidase M48B family. It depends on Zn(2+) as a cofactor.

It is found in the cell inner membrane. The chain is Protease HtpX homolog from Thiobacillus denitrificans (strain ATCC 25259 / T1).